The sequence spans 468 residues: Phosphatidylglycerol--prolipoprotein diacylglyceryl transferase (468 aa).

Transmembrane regions (helical) follow at residues 21–41 (LPVRAYAVCVITGIIVALLIG), 56–76 (YDIALWAVPFGLIGGRLYHLA), and 96–116 (IWDGGLGIWGAVTLGVMGAWI). R144 is a binding site for a 1,2-diacyl-sn-glycero-3-phospho-(1'-sn-glycerol). Transmembrane regions (helical) follow at residues 192–212 (VVQPTFLYELIWNVLVFVALI), 218–238 (FIIGHGRLFGFYVAFYCAGRF), and 256–276 (INSFTSTFVFIGAVVYIILAP). Positions 349–468 (VVQVADRDGE…RWWRLRRRRQ (120 aa)) are disordered. Low complexity predominate over residues 391–406 (AEAASAAPEEPAALAS). Residues 445–455 (DGIRRQDDFSS) show a composition bias toward basic and acidic residues. A compositionally biased stretch (basic residues) spans 456-468 (RRRRWWRLRRRRQ).

This sequence belongs to the Lgt family.

It is found in the cell membrane. The catalysed reaction is L-cysteinyl-[prolipoprotein] + a 1,2-diacyl-sn-glycero-3-phospho-(1'-sn-glycerol) = an S-1,2-diacyl-sn-glyceryl-L-cysteinyl-[prolipoprotein] + sn-glycerol 1-phosphate + H(+). The protein operates within protein modification; lipoprotein biosynthesis (diacylglyceryl transfer). In terms of biological role, catalyzes the transfer of the diacylglyceryl group from phosphatidylglycerol to the sulfhydryl group of the N-terminal cysteine of a prolipoprotein, the first step in the formation of mature lipoproteins. In Mycobacterium bovis (strain ATCC BAA-935 / AF2122/97), this protein is Phosphatidylglycerol--prolipoprotein diacylglyceryl transferase.